A 394-amino-acid polypeptide reads, in one-letter code: Elongation factor Tu (394 aa).

Residues 10–204 (KPHVNVGTIG…AVDEWIPTPT (195 aa)) form the tr-type G domain. The G1 stretch occupies residues 19–26 (GHIDHGKT). A GTP-binding site is contributed by 19–26 (GHIDHGKT). Thr-26 is a binding site for Mg(2+). The tract at residues 60–64 (GITIN) is G2. Positions 81–84 (DCPG) are G3. Residues 81–85 (DCPGH) and 136–139 (NKCD) contribute to the GTP site. Positions 136 to 139 (NKCD) are G4. The G5 stretch occupies residues 174-176 (SAL).

The protein belongs to the TRAFAC class translation factor GTPase superfamily. Classic translation factor GTPase family. EF-Tu/EF-1A subfamily. As to quaternary structure, monomer.

The protein localises to the cytoplasm. The enzyme catalyses GTP + H2O = GDP + phosphate + H(+). Its function is as follows. GTP hydrolase that promotes the GTP-dependent binding of aminoacyl-tRNA to the A-site of ribosomes during protein biosynthesis. This chain is Elongation factor Tu, found in Mycoplasma genitalium (strain ATCC 33530 / DSM 19775 / NCTC 10195 / G37) (Mycoplasmoides genitalium).